The following is a 716-amino-acid chain: Probable calcium-binding mitochondrial carrier K02F3.2 (716 aa).

Residues 1–345 (MSFDHLLTSS…CLKDIQAIDP (345 aa)) are N-terminal domain. 4 EF-hand domains span residues 93–121 (YNKE…FCAF), 127–162 (SPDA…TQPL), 165–195 (QDFD…CQLL), and 198–233 (FYEE…VKGH). The Ca(2+) site is built by D106, T108, D110, E117, D140, N142, S144, T146, and E151. Positions 211, 213, 215, 217, and 222 each coordinate Ca(2+). Residues 346–362 (ERLKRVSQMDRLINIKA) form a linker loop domain region. A carrier domain region spans residues 372-664 (GTAFLESAYR…RLFYVDFAGS (293 aa)). 3 Solcar repeats span residues 376 to 468 (LESA…MRDK), 475 to 560 (IPLY…AKLA), and 568 to 656 (NSPG…LQRL). A run of 6 helical transmembrane segments spans residues 382–399 (FLLG…VYPI), 443–462 (GLLP…LTMN), 485–498 (GTGG…TNPL), 535–554 (GSRA…FPAY), 574–591 (FASA…VTPA), and 631–650 (GTAA…LLTY). A C-terminal domain region spans residues 665–716 (RPTGSELATTKTIQDESSTNPDHVGGYKLAAATFSGIEHKFGLFLPKFETSK).

It belongs to the mitochondrial carrier (TC 2.A.29) family. As to quaternary structure, homodimer (via N-terminus).

The protein resides in the mitochondrion inner membrane. Functionally, mitochondrial and calcium-binding carrier that catalyzes the calcium-dependent exchange of cytoplasmic glutamate with mitochondrial aspartate across the mitochondrial inner membrane. The protein is Probable calcium-binding mitochondrial carrier K02F3.2 of Caenorhabditis elegans.